Here is a 265-residue protein sequence, read N- to C-terminus: Novel plant SNARE 11 (265 aa).

Topologically, residues 1 to 215 are cytoplasmic; sequence MDPISAVSEE…IGRQVATDKC (215 aa). Residues 30 to 75 are a coiled coil; sequence QKLEKIKDANRQSRQLEELTDKMRDCKSLIKDFDREIKSLESGNDA. Residues 144-206 form the t-SNARE coiled-coil homology domain; it reads NSMMDDTDQA…KKASKLVKEI (63 aa). Residues 216 to 236 form a helical; Anchor for type IV membrane protein membrane-spanning segment; it reads IMAFLFLIVIGVIAIIIVKIV. The Vesicular portion of the chain corresponds to 237-265; it reads NPNNKDIRDIPGVGLAPPAMNRRLLWNHY.

Belongs to the novel plant SNARE family. Interacts with KNOLLE to form a t-SNARE complex. Does not interact with SYP21, VTI12 or VPS45. Expressed in roots, stems, flower, siliques, expanding leaves, but not in mature leaves. Not limited to dividing cells.

It is found in the membrane. Its function is as follows. t-SNARE involved in diverse vesicle trafficking and membrane fusion processes, including cell plate formation. This Arabidopsis thaliana (Mouse-ear cress) protein is Novel plant SNARE 11 (NPSN11).